Here is a 237-residue protein sequence, read N- to C-terminus: C-type lectin domain family 4 member A (237 aa).

Residues 1–48 (MTSEITYAEVRFKNEFKSSGINTASSAASKERTAPHKSNTGFPKLLCA) lie on the Cytoplasmic side of the membrane. Positions 5–10 (ITYAEV) match the ITIM motif motif. The helical; Signal-anchor for type II membrane protein transmembrane segment at 49–69 (SLLIFFLLLAISFFIAFVIFF) threads the bilayer. The Extracellular segment spans residues 70–237 (QKYSQLLEKK…SVCEMMKIHL (168 aa)). Cystine bridges form between Cys-106–Cys-117, Cys-134–Cys-230, and Cys-203–Cys-222. A C-type lectin domain is found at 113 to 231 (FSSNCYFIST…CLGPQRSVCE (119 aa)). Residues Val-143, Asn-145, and Glu-149 each coordinate Ca(2+). Asn-185 carries N-linked (GlcNAc...) asparagine glycosylation. Residues Glu-195, Ser-197, and Glu-201 each coordinate Ca(2+). Alpha-D-mannopyranose is bound by residues 195-197 (EPS) and Glu-201. 207 to 209 (NFR) lines the N-acetyl-D-glucosamine pocket. Residues Asn-218, Asp-219, and Glu-231 each coordinate Ca(2+).

May interact with PTPN6 via its ITIM motif. In terms of tissue distribution, expressed preferentially in hematopoietic tissues. Expressed in all circulating Ag-presenting cells such as dendritic cells, myeloid cells, monocytes, macrophages, B-cells and epidermal Langerhans cells (at protein level). Expressed in peripheral blood leukocytes, neutrophils, moderate quantities in spleen, lymph node, and bone marrow, and at very low levels in thymus.

It localises to the cell membrane. Its function is as follows. C-type lectin receptor that binds carbohydrates mannose and fucose but also weakly interacts with N-acetylglucosamine (GlcNAc) in a Ca(2+)-dependent manner. Involved in regulating immune reactivity. Once triggered by antigen, it is internalized by clathrin-dependent endocytosis and delivers its antigenic cargo into the antigen presentation pathway resulting in cross-priming of CD8(+) T cells. This cross-presentation and cross-priming are enhanced by TLR7 and TLR8 agonists with increased expansion of the CD8(+) T cells, high production of IFNG and TNF with reduced levels of IL4, IL5 and IL13. In plasmacytoid dendritic cells, inhibits TLR9-mediated IFNA and TNF production. May be involved via its ITIM motif (immunoreceptor tyrosine-based inhibitory motifs) in the inhibition of B-cell-receptor-mediated calcium mobilization and protein tyrosine phosphorylation. (Microbial infection) Involved in the interaction between HIV-1 virus and dendritic cells. Enhances HIV-1 binding/entry and virus infection. Requires ITIM motif-associated signal transduction pathway involving phosphatases PTPN6 and PTPN11, SYK, Src kinases and MAP kinases. This is C-type lectin domain family 4 member A from Homo sapiens (Human).